The chain runs to 43 residues: Protein PsbN (43 aa).

Residues 7–27 (LIVFIASLLLGVTGYSVYTAF) traverse the membrane as a helical segment.

Belongs to the PsbN family.

Its subcellular location is the plastid. The protein resides in the chloroplast thylakoid membrane. Its function is as follows. May play a role in photosystem I and II biogenesis. This chain is Protein PsbN, found in Rhodomonas salina (Cryptomonas salina).